The chain runs to 185 residues: Adenine phosphoribosyltransferase (185 aa).

Belongs to the purine/pyrimidine phosphoribosyltransferase family. As to quaternary structure, homodimer.

The protein resides in the cytoplasm. It catalyses the reaction AMP + diphosphate = 5-phospho-alpha-D-ribose 1-diphosphate + adenine. It functions in the pathway purine metabolism; AMP biosynthesis via salvage pathway; AMP from adenine: step 1/1. Catalyzes a salvage reaction resulting in the formation of AMP, that is energically less costly than de novo synthesis. The sequence is that of Adenine phosphoribosyltransferase from Rubrobacter xylanophilus (strain DSM 9941 / JCM 11954 / NBRC 16129 / PRD-1).